A 174-amino-acid polypeptide reads, in one-letter code: Large ribosomal subunit protein uL10 (174 aa).

This sequence belongs to the universal ribosomal protein uL10 family. As to quaternary structure, part of the ribosomal stalk of the 50S ribosomal subunit. The N-terminus interacts with L11 and the large rRNA to form the base of the stalk. The C-terminus forms an elongated spine to which L12 dimers bind in a sequential fashion forming a multimeric L10(L12)X complex.

Its function is as follows. Forms part of the ribosomal stalk, playing a central role in the interaction of the ribosome with GTP-bound translation factors. The sequence is that of Large ribosomal subunit protein uL10 from Pelobacter propionicus (strain DSM 2379 / NBRC 103807 / OttBd1).